We begin with the raw amino-acid sequence, 709 residues long: Elongation factor G (709 aa).

In terms of domain architecture, tr-type G spans 10–286 (NKVRNIGIMA…AVVDFLPSPL (277 aa)). GTP-binding positions include 19 to 26 (AHIDAGKT), 83 to 87 (DTPGH), and 137 to 140 (NKMD).

The protein belongs to the TRAFAC class translation factor GTPase superfamily. Classic translation factor GTPase family. EF-G/EF-2 subfamily.

It localises to the cytoplasm. Catalyzes the GTP-dependent ribosomal translocation step during translation elongation. During this step, the ribosome changes from the pre-translocational (PRE) to the post-translocational (POST) state as the newly formed A-site-bound peptidyl-tRNA and P-site-bound deacylated tRNA move to the P and E sites, respectively. Catalyzes the coordinated movement of the two tRNA molecules, the mRNA and conformational changes in the ribosome. In Corynebacterium glutamicum (strain R), this protein is Elongation factor G.